Consider the following 186-residue polypeptide: UPF0398 protein BPUM_1952 (186 aa).

It belongs to the UPF0398 family.

The chain is UPF0398 protein BPUM_1952 from Bacillus pumilus (strain SAFR-032).